A 344-amino-acid polypeptide reads, in one-letter code: MAP3K12-binding inhibitory protein 1 (344 aa).

A Phosphoserine modification is found at Ser-91. Glycyl lysine isopeptide (Lys-Gly) (interchain with G-Cter in SUMO2) cross-links involve residues Lys-94, Lys-118, Lys-129, Lys-139, Lys-153, and Lys-235. The segment at 172–344 is interaction with MAP3K12; the sequence is AEINENNVRE…AESMATHHLP (173 aa). A leucine-zipper 1 region spans residues 271-285; that stretch reads IYQRIKKLEDKILEL. At Lys-301 the chain carries N6-acetyllysine; alternate. Lys-301 is covalently cross-linked (Glycyl lysine isopeptide (Lys-Gly) (interchain with G-Cter in SUMO2); alternate). Residues Lys-304 and Lys-325 each participate in a glycyl lysine isopeptide (Lys-Gly) (interchain with G-Cter in SUMO2) cross-link. The tract at residues 314 to 329 is leucine-zipper 2; sequence LAELDEKISALKQALL.

As to quaternary structure, component of the ADA2A-containing complex (ATAC), composed of KAT14, KAT2A, TADA2L, TADA3L, ZZ3, MBIP, WDR5, YEATS2, CCDC101 and DR1. In the complex, it probably interacts directly with KAT2A, KAT14 and WDR5. In terms of tissue distribution, ubiquitous. High expression seen in the heart and lung.

The protein resides in the nucleus. Its subcellular location is the cytoplasm. Functionally, inhibits the MAP3K12 activity to induce the activation of the JNK/SAPK pathway. Component of the ATAC complex, a complex with histone acetyltransferase activity on histones H3 and H4. The polypeptide is MAP3K12-binding inhibitory protein 1 (MBIP) (Homo sapiens (Human)).